We begin with the raw amino-acid sequence, 379 residues long: Cytochrome b (379 aa).

The next 4 helical transmembrane spans lie at 33–53 (FGSLLGACLTIQIITGLFLAM), 77–98 (WTIRYLHANGASVFFLCLFIHV), 113–133 (WNVGIILLFSVMATAFMGYVL), and 178–198 (FFALHFVLPFVILALVMIHLL). The heme b site is built by His83 and His97. The heme b site is built by His182 and His196. His201 contacts a ubiquinone. The next 4 helical transmembrane spans lie at 226–246 (TKDFLGLLLLILLLMVLTLFY), 288–308 (LGGVMALILSILILAIIPLLQ), 320–340 (LSQFLFWILVADLLTLTWIGG), and 347–367 (FITIGQVASILYFLLMVLIMP).

This sequence belongs to the cytochrome b family. The cytochrome bc1 complex contains 11 subunits: 3 respiratory subunits (MT-CYB, CYC1 and UQCRFS1), 2 core proteins (UQCRC1 and UQCRC2) and 6 low-molecular weight proteins (UQCRH/QCR6, UQCRB/QCR7, UQCRQ/QCR8, UQCR10/QCR9, UQCR11/QCR10 and a cleavage product of UQCRFS1). This cytochrome bc1 complex then forms a dimer. It depends on heme b as a cofactor.

It localises to the mitochondrion inner membrane. Its function is as follows. Component of the ubiquinol-cytochrome c reductase complex (complex III or cytochrome b-c1 complex) that is part of the mitochondrial respiratory chain. The b-c1 complex mediates electron transfer from ubiquinol to cytochrome c. Contributes to the generation of a proton gradient across the mitochondrial membrane that is then used for ATP synthesis. The sequence is that of Cytochrome b (MT-CYB) from Lepilemur edwardsi (Milne-Edwards's sportive lemur).